The following is a 209-amino-acid chain: Prolactin (209 aa).

A signal peptide spans Met1–Ala24. 2 disulfides stabilise this stretch: Cys70-Cys184 and Cys201-Cys209.

It belongs to the somatotropin/prolactin family.

It is found in the secreted. This chain is Prolactin (prl), found in Anguilla anguilla (European freshwater eel).